Here is a 215-residue protein sequence, read N- to C-terminus: Lysozyme-like protein 5 (215 aa).

An N-terminal signal peptide occupies residues M1–A17. One can recognise a Ch-type lysozyme domain in the interval A18–P215. Residues D23, D113, and E115 contribute to the active site.

It belongs to the glycosyl hydrolase 25 family.

Plays a role in resistance to Gram-positive bacteria S.aureus or B.thuringiensis infection. The polypeptide is Lysozyme-like protein 5 (Caenorhabditis elegans).